We begin with the raw amino-acid sequence, 379 residues long: Omega-3 fatty acid desaturase, endoplasmic reticulum (379 aa).

Residues 52–72 (LSYVVRDVIFVATLIGIAIHL) traverse the membrane as a helical segment. The Histidine box-1 signature appears at 97-101 (HDCGH). A Histidine box-2 motif is present at residues 133 to 137 (HKTHH). Helical transmembrane passes span 213-233 (TLCW…FGSL) and 236-256 (FKIY…VTYL). The Histidine box-3 motif lies at 300–304 (HVIHH).

This sequence belongs to the fatty acid desaturase type 1 family.

It is found in the endoplasmic reticulum membrane. It participates in lipid metabolism; polyunsaturated fatty acid biosynthesis. Functionally, ER (microsomal) omega-3 fatty acid desaturase introduces the third double bond in the biosynthesis of 18:3 fatty acids, important constituents of plant membranes. It is thought to use cytochrome b5 as an electron donor and to act on fatty acids esterified to phosphatidylcholine and, possibly, other phospholipids. In Nicotiana tabacum (Common tobacco), this protein is Omega-3 fatty acid desaturase, endoplasmic reticulum (FAD3).